The primary structure comprises 526 residues: Peptide chain release factor 3 (526 aa).

Residues 9–277 (DKRRTFAIIS…GIVEWAPKPL (269 aa)) enclose the tr-type G domain. GTP is bound by residues 18–25 (SHPDAGKT), 86–90 (DTPGH), and 140–143 (NKCD).

It belongs to the TRAFAC class translation factor GTPase superfamily. Classic translation factor GTPase family. PrfC subfamily.

Its subcellular location is the cytoplasm. In terms of biological role, increases the formation of ribosomal termination complexes and stimulates activities of RF-1 and RF-2. It binds guanine nucleotides and has strong preference for UGA stop codons. It may interact directly with the ribosome. The stimulation of RF-1 and RF-2 is significantly reduced by GTP and GDP, but not by GMP. The sequence is that of Peptide chain release factor 3 from Shewanella frigidimarina (strain NCIMB 400).